The chain runs to 588 residues: Snake venom 5'-nucleotidase (588 aa).

A signal peptide spans 1 to 40 (MQTPKRRRGAQGCPRSSPSPPLLLLVRAVWFCAALSVAAG). 2 residues coordinate Zn(2+): Asp51 and His53. A disulfide bridge links Cys66 with Cys71. Zn(2+)-binding residues include Asp99 and Asn131. Residue Asn167 is glycosylated (N-linked (GlcNAc...) asparagine). Zn(2+) contacts are provided by His234 and His257. 2 N-linked (GlcNAc...) asparagine glycosylation sites follow: Asn347 and Asn361. Intrachain disulfides connect Cys367/Cys372 and Cys379/Cys401. AMP is bound at residue Arg368. Residues Asn404 and Arg409 each contribute to the AMP site. A glycan (N-linked (GlcNAc...) asparagine) is linked at Asn418. AMP is bound at residue Phe432. A disulfide bridge links Cys491 with Cys494. Positions 515 and 521 each coordinate AMP. The N-linked (GlcNAc...) asparagine glycan is linked to Asn532. The GPI-anchor amidated serine moiety is linked to residue Ser564. The propeptide at 565-588 (AGTLFQAQLFLTWGLCVSLLYFIL) is removed in mature form.

This sequence belongs to the 5'-nucleotidase family. Requires Zn(2+) as cofactor. Venom 5'-nucleotidases (or a part thereof) may be released into the venom via exosome-like vesicles. They may be attached via a GPI anchor to the membrane of these vesicles. Soluble forms of 5'-nucleotidase might be released by cleavage of the ectodomain in the exosome-like vesicles or venom gland cells. Expressed by the venom gland.

It is found in the membrane. The catalysed reaction is a ribonucleoside 5'-phosphate + H2O = a ribonucleoside + phosphate. Hydrolyzes nucleotides into nucleosides. Snake venom 5'-nucleotidases are widely distributed among venomous snake taxa, but there is a lack of information about their biological activities. They have been shown to inhibit platelet aggregation. This effect may be due to the liberation of inhibitory AMP or adenosine by its action on ADP released upon initiation of aggregation. Venom 5'-nucleotidases are also known to synergistically act in vivo with other toxins like ADPases, phospholipases, and disintegrins to exert a more pronounced anti-coagulant effect. The chain is Snake venom 5'-nucleotidase from Crotalus adamanteus (Eastern diamondback rattlesnake).